Consider the following 233-residue polypeptide: Small ribosomal subunit protein uS3 (233 aa).

One can recognise a KH type-2 domain in the interval 39–107; that stretch reads VRQYLTKELA…PAQINIAEVR (69 aa).

It belongs to the universal ribosomal protein uS3 family. Part of the 30S ribosomal subunit. Forms a tight complex with proteins S10 and S14.

Binds the lower part of the 30S subunit head. Binds mRNA in the 70S ribosome, positioning it for translation. The chain is Small ribosomal subunit protein uS3 from Citrobacter koseri (strain ATCC BAA-895 / CDC 4225-83 / SGSC4696).